The sequence spans 160 residues: MNSSVFIRNARYRCYNYILNFIKFRQSNKPKKISKYKKGKEIKPFDSNNKFHKNRRYWINKQVAIRKMEKEMMLYLLKNKEPLSKEKKIRMKKIRLILKKLIYKKVKTKRQKFKFFKKNKLALNFKRKRYVNVLGRIVPKRFTKLKSKEQAFYFEIYVIY.

The protein localises to the plastid. This is an uncharacterized protein from Euglena longa (Euglenophycean alga).